Reading from the N-terminus, the 225-residue chain is F-box protein SKIP27 (225 aa).

An F-box domain is found at 121-169; sequence KSRLECLPQDLLIRVICGVDHEDLKSLKLVSKSIREASLVAKTLHFAYT.

As to quaternary structure, part of a SCF (ASK-cullin-F-box) protein ligase complex. Interacts with SKP1A/ASK1 and SPK1B/ASK2.

The protein localises to the nucleus. It functions in the pathway protein modification; protein ubiquitination. Functionally, component of SCF(ASK-cullin-F-box) E3 ubiquitin ligase complexes, which may mediate the ubiquitination and subsequent proteasomal degradation of target proteins. This Arabidopsis thaliana (Mouse-ear cress) protein is F-box protein SKIP27 (SKIP27).